We begin with the raw amino-acid sequence, 355 residues long: NADH dehydrogenase-like protein YutJ (355 aa).

Belongs to the NADH dehydrogenase family. The cofactor is FAD.

In Bacillus subtilis (strain 168), this protein is NADH dehydrogenase-like protein YutJ (yutJ).